We begin with the raw amino-acid sequence, 141 residues long: Large ribosomal subunit protein uL11 (141 aa).

The interval methionine 1–proline 23 is disordered.

Belongs to the universal ribosomal protein uL11 family. As to quaternary structure, part of the ribosomal stalk of the 50S ribosomal subunit. Interacts with L10 and the large rRNA to form the base of the stalk. L10 forms an elongated spine to which L12 dimers bind in a sequential fashion forming a multimeric L10(L12)X complex. Post-translationally, one or more lysine residues are methylated.

In terms of biological role, forms part of the ribosomal stalk which helps the ribosome interact with GTP-bound translation factors. This is Large ribosomal subunit protein uL11 from Rhodopirellula baltica (strain DSM 10527 / NCIMB 13988 / SH1).